Consider the following 269-residue polypeptide: Putative phosphoenolpyruvate synthase regulatory protein (269 aa).

149-156 is a binding site for ADP; that stretch reads GVSRSGKT.

The protein belongs to the pyruvate, phosphate/water dikinase regulatory protein family. PSRP subfamily.

The catalysed reaction is [pyruvate, water dikinase] + ADP = [pyruvate, water dikinase]-phosphate + AMP + H(+). The enzyme catalyses [pyruvate, water dikinase]-phosphate + phosphate + H(+) = [pyruvate, water dikinase] + diphosphate. Functionally, bifunctional serine/threonine kinase and phosphorylase involved in the regulation of the phosphoenolpyruvate synthase (PEPS) by catalyzing its phosphorylation/dephosphorylation. The chain is Putative phosphoenolpyruvate synthase regulatory protein from Pseudoalteromonas translucida (strain TAC 125).